We begin with the raw amino-acid sequence, 229 residues long: Small ribosomal subunit protein uS5 (229 aa).

The 64-residue stretch at 61-124 folds into the S5 DRBM domain; it reads LEEQVLDVKL…AHAKLSLIKV (64 aa).

This sequence belongs to the universal ribosomal protein uS5 family. As to quaternary structure, part of the 30S ribosomal subunit. Contacts protein S4.

In terms of biological role, with S4 and S12 plays an important role in translational accuracy. This chain is Small ribosomal subunit protein uS5, found in Methanococcus maripaludis (strain C6 / ATCC BAA-1332).